The primary structure comprises 505 residues: MINRRIRVRFAPSPTGPLHIGGVRTALYNYLFARQHGGDMILRIEDTDSNRFVPGAEAYIIEALEWLGIKFDEGVGYGGRFGPYRQSERRDIYRTYVRQLLDSGRAYIAFDTPEELEARRAEVPNFQYDATTRGQMRNSLTLPAEEVERLVAEGTQYVVRFLVEPNLDVEVNDLIRGRVVINSSILDDKVLYKSADDLPTYHLANIVDDHLMEVSHVIRGEEWLPSAPLHVLLYRAFGWEDTMPRFAHLALLLKPEGNGKLSKRDGDRLGFPVFPLEWKDPQTGDISKGYRESGYLPEAVVNFLALLGWNPGNDQDVMSMDELIRLFDIEKCSKAGAKFDYEKGRWFNHQYIQRKDNAELAELFRPILRENGVVATDEKTAHVISLVKERVNFIGELWEQAGFFFIAPLSYDEKTVKKRWKEDTAKQLGELAELLDSHRSFAAEATEPTVKNWIETNGYHLGNIMNATRLALVGESKGPHIFDIMEVLGREETVGRIRRAIEVLG.

Positions 12–22 (PSPTGPLHIGG) match the 'HIGH' region motif. The 'KMSKS' region signature appears at 260 to 264 (KLSKR). Lys263 contributes to the ATP binding site.

It belongs to the class-I aminoacyl-tRNA synthetase family. Glutamate--tRNA ligase type 1 subfamily. As to quaternary structure, monomer.

The protein resides in the cytoplasm. The catalysed reaction is tRNA(Glu) + L-glutamate + ATP = L-glutamyl-tRNA(Glu) + AMP + diphosphate. In terms of biological role, catalyzes the attachment of glutamate to tRNA(Glu) in a two-step reaction: glutamate is first activated by ATP to form Glu-AMP and then transferred to the acceptor end of tRNA(Glu). This is Glutamate--tRNA ligase from Porphyromonas gingivalis (strain ATCC BAA-308 / W83).